The following is a 401-amino-acid chain: LL-diaminopimelate aminotransferase (401 aa).

Positions 15 and 42 each coordinate substrate. Residues Tyr-72, 108–109 (AK), Tyr-132, Asn-176, Tyr-207, and 235–237 (SFS) contribute to the pyridoxal 5'-phosphate site. Substrate is bound by residues Lys-109, Tyr-132, and Asn-176. Lys-238 carries the post-translational modification N6-(pyridoxal phosphate)lysine. Arg-246 and Asn-281 together coordinate pyridoxal 5'-phosphate. Substrate is bound by residues Asn-281 and Arg-377.

This sequence belongs to the class-I pyridoxal-phosphate-dependent aminotransferase family. LL-diaminopimelate aminotransferase subfamily. Homodimer. Requires pyridoxal 5'-phosphate as cofactor.

The enzyme catalyses (2S,6S)-2,6-diaminopimelate + 2-oxoglutarate = (S)-2,3,4,5-tetrahydrodipicolinate + L-glutamate + H2O + H(+). Its pathway is amino-acid biosynthesis; L-lysine biosynthesis via DAP pathway; LL-2,6-diaminopimelate from (S)-tetrahydrodipicolinate (aminotransferase route): step 1/1. In terms of biological role, involved in the synthesis of meso-diaminopimelate (m-DAP or DL-DAP), required for both lysine and peptidoglycan biosynthesis. Catalyzes the direct conversion of tetrahydrodipicolinate to LL-diaminopimelate. The chain is LL-diaminopimelate aminotransferase from Azobacteroides pseudotrichonymphae genomovar. CFP2.